The sequence spans 150 residues: Deoxyuridine 5'-triphosphate nucleotidohydrolase (150 aa).

Residues 67–69 (RSS), Asn80, and 84–86 (VID) each bind substrate.

It belongs to the dUTPase family. The cofactor is Mg(2+).

The enzyme catalyses dUTP + H2O = dUMP + diphosphate + H(+). It functions in the pathway pyrimidine metabolism; dUMP biosynthesis; dUMP from dCTP (dUTP route): step 2/2. In terms of biological role, this enzyme is involved in nucleotide metabolism: it produces dUMP, the immediate precursor of thymidine nucleotides and it decreases the intracellular concentration of dUTP so that uracil cannot be incorporated into DNA. This Lactococcus lactis subsp. lactis (strain IL1403) (Streptococcus lactis) protein is Deoxyuridine 5'-triphosphate nucleotidohydrolase (dut).